The following is a 209-amino-acid chain: MTQARTKKNPPLRVGVGGPVGSGKTTLLEMLCKAMRDRYDLVAITNDIYTKEDQRLLTVSGALPAERIMGVETGGCPHTAIREDASINLEAVDRMLARFPDADVVFIESGGDNLAATFSPELSDLTIYVIDVAGGEKIPRKGGPGITKSDLLVINKTDLAPYVGASLEVMESDARKMRGARPFVMGSVKSGQGLDEVIRFIERQGMLGV.

Residue glycine 18–threonine 25 coordinates GTP.

Belongs to the SIMIBI class G3E GTPase family. UreG subfamily. As to quaternary structure, homodimer. UreD, UreF and UreG form a complex that acts as a GTP-hydrolysis-dependent molecular chaperone, activating the urease apoprotein by helping to assemble the nickel containing metallocenter of UreC. The UreE protein probably delivers the nickel.

Its subcellular location is the cytoplasm. In terms of biological role, facilitates the functional incorporation of the urease nickel metallocenter. This process requires GTP hydrolysis, probably effectuated by UreG. This is Urease accessory protein UreG from Cupriavidus necator (strain ATCC 17699 / DSM 428 / KCTC 22496 / NCIMB 10442 / H16 / Stanier 337) (Ralstonia eutropha).